The sequence spans 472 residues: Methanethiol oxidase (472 aa).

Ala2 carries the N-acetylalanine modification. Ser111 and Ser467 each carry phosphoserine.

This sequence belongs to the selenium-binding protein family. As to quaternary structure, interacts with USP33. In terms of processing, the N-terminus is blocked. In terms of tissue distribution, highly expressed in liver, kidney and, to a lesser extent, lung.

Its subcellular location is the nucleus. The protein localises to the cytoplasm. The protein resides in the cytosol. It is found in the membrane. It catalyses the reaction methanethiol + O2 + H2O = hydrogen sulfide + formaldehyde + H2O2 + H(+). It participates in organosulfur degradation. Its function is as follows. Catalyzes the oxidation of methanethiol, an organosulfur compound known to be produced in substantial amounts by gut bacteria. Selenium-binding protein which may be involved in the sensing of reactive xenobiotics in the cytoplasm. May be involved in intra-Golgi protein transport. This chain is Methanethiol oxidase (Selenbp1), found in Mus musculus (Mouse).